We begin with the raw amino-acid sequence, 872 residues long: Alanine--tRNA ligase (872 aa).

The Zn(2+) site is built by His-566, His-570, Cys-668, and His-672.

The protein belongs to the class-II aminoacyl-tRNA synthetase family. Requires Zn(2+) as cofactor.

It localises to the cytoplasm. The catalysed reaction is tRNA(Ala) + L-alanine + ATP = L-alanyl-tRNA(Ala) + AMP + diphosphate. Its function is as follows. Catalyzes the attachment of alanine to tRNA(Ala) in a two-step reaction: alanine is first activated by ATP to form Ala-AMP and then transferred to the acceptor end of tRNA(Ala). Also edits incorrectly charged Ser-tRNA(Ala) and Gly-tRNA(Ala) via its editing domain. This Lactococcus lactis subsp. cremoris (strain SK11) protein is Alanine--tRNA ligase.